We begin with the raw amino-acid sequence, 876 residues long: Leucine--tRNA ligase (876 aa).

A 'HIGH' region motif is present at residues 42-52 (PYPSGKLHMGH). Residues 634 to 638 (KMSKS) carry the 'KMSKS' region motif. Lys-637 lines the ATP pocket.

This sequence belongs to the class-I aminoacyl-tRNA synthetase family.

The protein localises to the cytoplasm. It catalyses the reaction tRNA(Leu) + L-leucine + ATP = L-leucyl-tRNA(Leu) + AMP + diphosphate. The chain is Leucine--tRNA ligase from Neisseria meningitidis serogroup C / serotype 2a (strain ATCC 700532 / DSM 15464 / FAM18).